A 142-amino-acid chain; its full sequence is Putative pre-16S rRNA nuclease (142 aa).

It belongs to the YqgF nuclease family.

The protein resides in the cytoplasm. Its function is as follows. Could be a nuclease involved in processing of the 5'-end of pre-16S rRNA. This Lactobacillus helveticus (strain DPC 4571) protein is Putative pre-16S rRNA nuclease.